Reading from the N-terminus, the 448-residue chain is DEAD-box ATP-dependent RNA helicase CshB (448 aa).

A Q motif motif is present at residues 4 to 32 (HPFEQFNLESSLIDAVKDLNFEKPTEIQN). A Helicase ATP-binding domain is found at 35 to 206 (IPRILKRTNL…NKYLSHPEYV (172 aa)). 48 to 55 (SQTGTGKS) contributes to the ATP binding site. The DEAD box motif lies at 154–157 (DEAD). In terms of domain architecture, Helicase C-terminal spans 236–386 (NLIDILNPYL…EVKAHNQRQA (151 aa)). A compositionally biased stretch (basic residues) spans 400-418 (NKVRSKIKNKVKPGYKKKF). Residues 400-448 (NKVRSKIKNKVKPGYKKKFKQEVEKMKRQERKQFSKQQNRQKRKQNKKG) form a disordered region. Positions 419 to 432 (KQEVEKMKRQERKQ) are enriched in basic and acidic residues. Residues 438-448 (NRQKRKQNKKG) show a composition bias toward basic residues.

It belongs to the DEAD box helicase family. CshB subfamily.

It localises to the cytoplasm. The catalysed reaction is ATP + H2O = ADP + phosphate + H(+). In terms of biological role, probable DEAD-box RNA helicase. May work in conjunction with the cold shock proteins to ensure proper initiation of transcription at low and optimal temperatures. The polypeptide is DEAD-box ATP-dependent RNA helicase CshB (Staphylococcus aureus (strain NCTC 8325 / PS 47)).